A 255-amino-acid chain; its full sequence is Flap endonuclease Xni (255 aa).

Position 105 (D105) interacts with Mg(2+). A 5'-3' exonuclease domain is found at 162–253 (EHSQFIDYLA…NLSQFRLPNP (92 aa)). K(+) is bound by residues L172, A173, P181, V183, and I186. Residues 185-190 (GIGPKS) are interaction with DNA.

The protein belongs to the Xni family. Requires Mg(2+) as cofactor. K(+) serves as cofactor.

Has flap endonuclease activity. During DNA replication, flap endonucleases cleave the 5'-overhanging flap structure that is generated by displacement synthesis when DNA polymerase encounters the 5'-end of a downstream Okazaki fragment. In Shewanella sediminis (strain HAW-EB3), this protein is Flap endonuclease Xni.